A 314-amino-acid chain; its full sequence is tRNA pseudouridine synthase B (314 aa).

H43 serves as a coordination point for substrate. The active-site Nucleophile is D48. Residues Y76, Y179, and L200 each coordinate substrate.

This sequence belongs to the pseudouridine synthase TruB family. Type 1 subfamily.

The catalysed reaction is uridine(55) in tRNA = pseudouridine(55) in tRNA. Its function is as follows. Responsible for synthesis of pseudouridine from uracil-55 in the psi GC loop of transfer RNAs. The sequence is that of tRNA pseudouridine synthase B from Salmonella arizonae (strain ATCC BAA-731 / CDC346-86 / RSK2980).